We begin with the raw amino-acid sequence, 1265 residues long: Cohesin subunit SA-1 (1265 aa).

Residues 1–16 (MITSELSVLQDSTNES) are compositionally biased toward polar residues. Disordered regions lie at residues 1–21 (MITS…VMHT) and 37–91 (DLEV…EGDP). Positions 62–73 (TPGDRSRAEPGS) are enriched in basic and acidic residues. The 86-residue stretch at 303-388 (FVHRYRDAIA…NRFKDRIVSM (86 aa)) folds into the SCD domain. Disordered stretches follow at residues 1063–1097 (GDED…KRVI) and 1111–1130 (DTIQ…TVLR). A compositionally biased stretch (low complexity) spans 1069–1082 (SVNSGGSNSKGSSV). A compositionally biased stretch (basic residues) spans 1083–1095 (RSKKGRPPLHKKR). Over residues 1111–1129 (DTIQTPGALTTPQLTSTVL) the composition is skewed to polar residues.

It belongs to the SCC3 family. Interacts directly with RAD21 in cohesin complex. Cohesin complexes are composed of a heterodimer between and SMC3, which are attached via their hinge domain, and RAD21 which link them at their heads, and one STAG protein (STAG1 OR STAG2). In cohesin complexes, STAG1 is mutually exclusive with STAG2. In terms of processing, phosphorylated by PLK1. The large dissociation of cohesin from chromosome arms during prophase is partly due to its phosphorylation.

The protein localises to the nucleus. The protein resides in the chromosome. Its subcellular location is the centromere. Functionally, component of cohesin complex, a complex required for the cohesion of sister chromatids after DNA replication. The cohesin complex apparently forms a large proteinaceous ring within which sister chromatids can be trapped. At anaphase, the complex is cleaved and dissociates from chromatin, allowing sister chromatids to segregate. The cohesin complex may also play a role in spindle pole assembly during mitosis. The chain is Cohesin subunit SA-1 (stag1) from Xenopus laevis (African clawed frog).